The chain runs to 411 residues: Allantoate amidohydrolase (411 aa).

Residues H81, D92, E127, and H190 each contribute to the Zn(2+) site. R215, N275, and R288 together coordinate allantoate. H382 is a Zn(2+) binding site.

This sequence belongs to the peptidase M20 family. Homodimer. Zn(2+) is required as a cofactor.

The protein localises to the cytoplasm. It catalyses the reaction allantoate + H2O + 2 H(+) = (S)-2-ureidoglycine + NH4(+) + CO2. Its pathway is nitrogen metabolism; (S)-allantoin degradation. Its activity is regulated as follows. Sulfate could be an allosteric effector of the enzyme that is responsible for stabilizing substrate binding. In addition, this anion effector may act as a counterion during enzyme-mediated catalysis. Involved in the anaerobic nitrogen utilization via the assimilation of allantoin. Catalyzes specifically the hydrolysis of allantoate to yield CO2, NH3 and S-ureidoglycine, which is unstable and readily undergoes a second deamination by S-ureidoglycine aminohydrolase AllE to yield S-ureidoglycolate and NH3. In vivo, the spontaneous release of S-ureidoglycolate and ammonia from S-ureidoglycine appears to be too slow to sustain an efficient flux of nitrogen. The sequence is that of Allantoate amidohydrolase from Escherichia coli (strain K12).